We begin with the raw amino-acid sequence, 586 residues long: MASANALSSASVLCSSRQSKLGGGNQQQGQRVSYNKRTIRRFSVRANVKEIAFDQHSRAALQAGIDKLADCVGLTLGPRGRNVVLDEFGSPKVVNDGVTIARAIELPNAMENAGAALIREVASKTNDSAGDGTTTASILAREIIKHGLLSVTSGANPVSLKRGIDKTVQGLIEELQKKARPVKGRDDIRAVASISAGNDDLIGSMIADAIDKVGPDGVLSIESSSSFETTVEVEEGMEIDRGYISPQFVTNPEKLLAEFENARVLITDQKITAIKDIIPILEKTTQLRAPLLIIAEDVTGEALATLVVNKLRGVLNVVAVKAPGFGERRKAMLQDIAILTGAEYLAMDMSLLVENATIDQLGIARKVTISKDSTTLIADAASKDELQARIAQLKKELFETDSVYDSEKLAERIAKLSGGVAVIKVGAATETELEDRKLRIEDAKNATFAAIEEGIVPGGGAALVHLSTVIPAIKETFEDADERLGADIVQKALLSPAALIAQNAGVEGEVVVEKIMFSDWENGYNAMTDTYENLFEAGVIDPAKVTRCALQNAASVAGMVLTTQAIVVDKPKPKAPAAAAPEGLMV.

The transit peptide at Met1–Ala46 directs the protein to the chloroplast. A Phosphoserine modification is found at Ser90.

Belongs to the chaperonin (HSP60) family. In terms of assembly, part of the Cpn60 complex composed of 7 alpha and 7 beta subunits. This complex shows ATPase activity. The Cpn60 complex interacts with the Cpn10 complex. Expressed in leaves, stems, siliques and flowers.

Its subcellular location is the plastid. The protein resides in the chloroplast. In terms of biological role, binds RuBisCO small and large subunits and is implicated in the assembly of the enzyme oligomer. Involved in protein assisted folding. Required for proper chloroplast development. The polypeptide is Chaperonin 60 subunit alpha 1, chloroplastic (CPN60A1) (Arabidopsis thaliana (Mouse-ear cress)).